The sequence spans 788 residues: Diacylglycerol kinase gamma (788 aa).

Residues 83 to 93 show a composition bias toward basic and acidic residues; it reads PRQETPDHPKE. The segment at 83–150 is disordered; sequence PRQETPDHPK…WGEPNAPASS (68 aa). Residues 95–109 are compositionally biased toward polar residues; sequence ASSSEPNVSDSNAES. EF-hand domains lie at 172 to 207 and 217 to 252; these read RPQDKLEFMFRLYDSDENELLDQAELDQIVSQMLHV and ELRPILKEMLQGMDYNKDGFVSLEEWVSGGMTTIPL. Ca(2+)-binding residues include aspartate 185, aspartate 187, asparagine 189, glutamate 196, aspartate 230, asparagine 232, aspartate 234, and glutamate 241. 2 Phorbol-ester/DAG-type zinc fingers span residues 268-318 and 333-380; these read RHAW…IPGC and QHAW…STAC. In terms of domain architecture, DAGKc spans 427–561; it reads PGTHPLLVLV…LDRWYLEVMP (135 aa). Positions 768 to 788 are disordered; it reads MMGPPQKSSFFSLRRKSRSKD.

The protein belongs to the eukaryotic diacylglycerol kinase family. As to expression, expressed specifically in brain. Highly expressed in cerebellar Purkinje cells (at protein level).

Its subcellular location is the membrane. The protein resides in the cytoplasm. It is found in the cytosol. The protein localises to the cytoskeleton. The enzyme catalyses a 1,2-diacyl-sn-glycerol + ATP = a 1,2-diacyl-sn-glycero-3-phosphate + ADP + H(+). It carries out the reaction 1,2-didecanoyl-sn-glycerol + ATP = 1,2-didecanoyl-sn-glycero-3-phosphate + ADP + H(+). It catalyses the reaction 1,2-di-(9Z-octadecenoyl)-sn-glycerol + ATP = 1,2-di-(9Z-octadecenoyl)-sn-glycero-3-phosphate + ADP + H(+). The catalysed reaction is 1-octadecanoyl-2-(9Z,12Z)-octadecadienoyl-sn-glycerol + ATP = 1-octadecanoyl-2-(9Z,12Z-octadecadienoyl)-sn-glycero-3-phosphate + ADP + H(+). The enzyme catalyses 1-octadecanoyl-2-(5Z,8Z,11Z,14Z-eicosatetraenoyl)-sn-glycerol + ATP = 1-octadecanoyl-2-(5Z,8Z,11Z,14Z-eicosatetraenoyl)-sn-glycero-3-phosphate + ADP + H(+). It participates in lipid metabolism; glycerolipid metabolism. The activity is calcium-dependent. Requires phosphatidylserine for maximal activity. In terms of biological role, diacylglycerol kinase that converts diacylglycerol/DAG into phosphatidic acid/phosphatidate/PA and regulates the respective levels of these two bioactive lipids. Thereby, acts as a central switch between the signaling pathways activated by these second messengers with different cellular targets and opposite effects in numerous biological processes. Has no apparent specificity with regard to the acyl compositions of diacylglycerol. Specifically expressed in the cerebellum where it controls the level of diacylglycerol which in turn regulates the activity of protein kinase C gamma. Through protein kinase C gamma, indirectly regulates the dendritic development of Purkinje cells, cerebellar long term depression and ultimately cerebellar motor coordination. This chain is Diacylglycerol kinase gamma (Dgkg), found in Rattus norvegicus (Rat).